Here is a 257-residue protein sequence, read N- to C-terminus: Zinc import ATP-binding protein ZnuC (257 aa).

One can recognise an ABC transporter domain in the interval 6-221 (VRLEQITVAF…AFVETFGHQV (216 aa)). 38 to 45 (GPNGAGKT) provides a ligand contact to ATP.

The protein belongs to the ABC transporter superfamily. Zinc importer (TC 3.A.1.15.5) family. The complex is composed of two ATP-binding proteins (ZnuC), two transmembrane proteins (ZnuB) and a solute-binding protein (ZnuA).

The protein localises to the cell inner membrane. It carries out the reaction Zn(2+)(out) + ATP(in) + H2O(in) = Zn(2+)(in) + ADP(in) + phosphate(in) + H(+)(in). In terms of biological role, part of the ABC transporter complex ZnuABC involved in zinc import. Responsible for energy coupling to the transport system. The chain is Zinc import ATP-binding protein ZnuC from Marinobacter nauticus (strain ATCC 700491 / DSM 11845 / VT8) (Marinobacter aquaeolei).